The primary structure comprises 401 residues: Dual-specificity RNA methyltransferase RlmN (401 aa).

The Proton acceptor role is filled by E114. The 246-residue stretch at 120 to 365 (DKGRGTLCVS…TMVRRTRGDD (246 aa)) folds into the Radical SAM core domain. Cysteines 127 and 370 form a disulfide. [4Fe-4S] cluster is bound by residues C134, C138, and C141. S-adenosyl-L-methionine is bound by residues 187–188 (GE), S219, 241–243 (SLH), and N327. The S-methylcysteine intermediate role is filled by C370.

The protein belongs to the radical SAM superfamily. RlmN family. [4Fe-4S] cluster serves as cofactor.

The protein localises to the cytoplasm. The catalysed reaction is adenosine(2503) in 23S rRNA + 2 reduced [2Fe-2S]-[ferredoxin] + 2 S-adenosyl-L-methionine = 2-methyladenosine(2503) in 23S rRNA + 5'-deoxyadenosine + L-methionine + 2 oxidized [2Fe-2S]-[ferredoxin] + S-adenosyl-L-homocysteine. The enzyme catalyses adenosine(37) in tRNA + 2 reduced [2Fe-2S]-[ferredoxin] + 2 S-adenosyl-L-methionine = 2-methyladenosine(37) in tRNA + 5'-deoxyadenosine + L-methionine + 2 oxidized [2Fe-2S]-[ferredoxin] + S-adenosyl-L-homocysteine. Its function is as follows. Specifically methylates position 2 of adenine 2503 in 23S rRNA and position 2 of adenine 37 in tRNAs. m2A2503 modification seems to play a crucial role in the proofreading step occurring at the peptidyl transferase center and thus would serve to optimize ribosomal fidelity. The sequence is that of Dual-specificity RNA methyltransferase RlmN from Xanthomonas campestris pv. campestris (strain B100).